The primary structure comprises 244 residues: ATP synthase subunit O, mitochondrial (244 aa).

The N-terminal 45 residues, 1 to 45 (MAMTGRARSMGFSILQKALSSAQRSNAHRSILCPTLSNSELLRNY), are a transit peptide targeting the mitochondrion.

It belongs to the ATPase delta chain family. As to quaternary structure, F-type ATPases have 2 components, CF(1) - the catalytic core - and CF(0) - the membrane proton channel. CF(1) has five subunits: alpha(3), beta(3), gamma(1), delta(1), epsilon(1). CF(0) has three main subunits: a, b and c.

It is found in the mitochondrion. It localises to the mitochondrion inner membrane. Its function is as follows. Mitochondrial membrane ATP synthase (F(1)F(0) ATP synthase or Complex V) produces ATP from ADP in the presence of a proton gradient across the membrane which is generated by electron transport complexes of the respiratory chain. F-type ATPases consist of two structural domains, F(1) - containing the extramembraneous catalytic core and F(0) - containing the membrane proton channel, linked together by a central stalk and a peripheral stalk. During catalysis, ATP synthesis in the catalytic domain of F(1) is coupled via a rotary mechanism of the central stalk subunits to proton translocation. Part of the complex F(0) domain and the peripheric stalk, which acts as a stator to hold the catalytic alpha(3)beta(3) subcomplex and subunit a/ATP6 static relative to the rotary elements. This chain is ATP synthase subunit O, mitochondrial, found in Ipomoea batatas (Sweet potato).